Reading from the N-terminus, the 244-residue chain is DNA polymerase sliding clamp (244 aa).

This sequence belongs to the PCNA family. Homotrimer. The subunits circularize to form a toroid; DNA passes through its center. Replication factor C (RFC) is required to load the toroid on the DNA.

Functionally, sliding clamp subunit that acts as a moving platform for DNA processing. Responsible for tethering the catalytic subunit of DNA polymerase to DNA during high-speed replication. In conjunction with replication factor C (RFC) stimulates DNA synthesis by PolB, relieving inhibition by replication protein A (RPA). This chain is DNA polymerase sliding clamp, found in Methanothermobacter thermautotrophicus (strain ATCC 29096 / DSM 1053 / JCM 10044 / NBRC 100330 / Delta H) (Methanobacterium thermoautotrophicum).